A 566-amino-acid chain; its full sequence is Cytochrome c oxidase subunit 1 (566 aa).

7 helical membrane-spanning segments follow: residues 29 to 49 (IGVLYLFTGGLVGLISVAFTV), 97 to 117 (VMITGHGILMMFFVVIPALFG), 141 to 161 (LSYWLYVAGTSLAVASLFAPG), 189 to 209 (LAIFAVHLSGASSILGAINMI), 227 to 247 (LFAWSIFVTAWLILLALPVLA), 278 to 298 (ILWFFGHPEVYIIVLPAFGIV), and 310 to 330 (IFGYLPMVYAMVAIGVLGFVV). Residue histidine 102 participates in Fe(II)-heme a binding. The Cu cation site is built by histidine 284 and tyrosine 288. Residues 284–288 (HPEVY) constitute a cross-link (1'-histidyl-3'-tyrosine (His-Tyr)). Residues histidine 333 and histidine 334 each contribute to the Cu cation site. Helical transmembrane passes span 348–368 (FMMATMVIAVPTGIKIFSWIA) and 381–401 (MLWALGFLFLFTVGGVTGIVL). Residue histidine 419 participates in heme a3 binding. The next 3 helical transmembrane spans lie at 420 to 440 (FHYVMSLGAVFGIFAGIYFWI), 455 to 475 (LHFWMMFVGANLTFFPQHFLG), and 499 to 519 (LGAFLSFASFLFFLGVIFYTL). Fe(II)-heme a is bound at residue histidine 421. The segment at 543 to 566 (TSPPPEHTFEQLPKREDWERAPAH) is disordered. Basic and acidic residues predominate over residues 549 to 566 (HTFEQLPKREDWERAPAH).

Belongs to the heme-copper respiratory oxidase family. The cofactor is Cu(2+). It depends on heme as a cofactor.

Its subcellular location is the cell membrane. The enzyme catalyses 4 Fe(II)-[cytochrome c] + O2 + 8 H(+)(in) = 4 Fe(III)-[cytochrome c] + 2 H2O + 4 H(+)(out). It participates in energy metabolism; oxidative phosphorylation. In terms of biological role, cytochrome c oxidase is the component of the respiratory chain that catalyzes the reduction of oxygen to water. Subunits 1-3 form the functional core of the enzyme complex. Co I is the catalytic subunit of the enzyme. Electrons originating in cytochrome c are transferred via the copper A center of subunit 2 and heme a of subunit 1 to the bimetallic center formed by heme a3 and copper B. This cytochrome c oxidase shows proton pump activity across the membrane in addition to the electron transfer. This chain is Cytochrome c oxidase subunit 1 (ctaD), found in Cereibacter sphaeroides (Rhodobacter sphaeroides).